The chain runs to 195 residues: MLQFVLASASPARRQLLQSIGINPLVYQSNFDESSVAIADHHELVQTLARCKAEVVANQLAAPALVLGCDSVLVLQGKIYGKPKDPADAIARWQSMRGQSGELLTGHTLIDLYQNKTLVRLEITQVDFAWISDRQIAAYVATGEPLNCAGAFALDGRGGLFVDRIVGCPSNVIGLSLPLLRKMLTALGYSPADCW.

The Proton acceptor role is filled by aspartate 70.

This sequence belongs to the Maf family. The cofactor is a divalent metal cation.

It localises to the cytoplasm. It carries out the reaction a ribonucleoside 5'-triphosphate + H2O = a ribonucleoside 5'-phosphate + diphosphate + H(+). The enzyme catalyses a 2'-deoxyribonucleoside 5'-triphosphate + H2O = a 2'-deoxyribonucleoside 5'-phosphate + diphosphate + H(+). Nucleoside triphosphate pyrophosphatase. May have a dual role in cell division arrest and in preventing the incorporation of modified nucleotides into cellular nucleic acids. The polypeptide is Nucleoside triphosphate pyrophosphatase (Cyanothece sp. (strain PCC 7425 / ATCC 29141)).